Reading from the N-terminus, the 285-residue chain is Bifunctional protein FolD (285 aa).

NADP(+)-binding positions include 165-167 (GRG), T192, and V233.

Belongs to the tetrahydrofolate dehydrogenase/cyclohydrolase family. In terms of assembly, homodimer.

It catalyses the reaction (6R)-5,10-methylene-5,6,7,8-tetrahydrofolate + NADP(+) = (6R)-5,10-methenyltetrahydrofolate + NADPH. The catalysed reaction is (6R)-5,10-methenyltetrahydrofolate + H2O = (6R)-10-formyltetrahydrofolate + H(+). The protein operates within one-carbon metabolism; tetrahydrofolate interconversion. Its function is as follows. Catalyzes the oxidation of 5,10-methylenetetrahydrofolate to 5,10-methenyltetrahydrofolate and then the hydrolysis of 5,10-methenyltetrahydrofolate to 10-formyltetrahydrofolate. This chain is Bifunctional protein FolD, found in Corynebacterium jeikeium (strain K411).